The primary structure comprises 329 residues: DNA-directed RNA polymerase subunit alpha (329 aa).

The tract at residues 1–235 is alpha N-terminal domain (alpha-NTD); the sequence is MLGSVTDFLK…EQLEAFVDLR (235 aa). The interval 249–329 is alpha C-terminal domain (alpha-CTD); it reads FDPILLRPVD…NWPPASIADE (81 aa).

The protein belongs to the RNA polymerase alpha chain family. Homodimer. The RNAP catalytic core consists of 2 alpha, 1 beta, 1 beta' and 1 omega subunit. When a sigma factor is associated with the core the holoenzyme is formed, which can initiate transcription.

It catalyses the reaction RNA(n) + a ribonucleoside 5'-triphosphate = RNA(n+1) + diphosphate. Its function is as follows. DNA-dependent RNA polymerase catalyzes the transcription of DNA into RNA using the four ribonucleoside triphosphates as substrates. The protein is DNA-directed RNA polymerase subunit alpha of Aeromonas hydrophila subsp. hydrophila (strain ATCC 7966 / DSM 30187 / BCRC 13018 / CCUG 14551 / JCM 1027 / KCTC 2358 / NCIMB 9240 / NCTC 8049).